A 409-amino-acid polypeptide reads, in one-letter code: Multifunctional CCA protein (409 aa).

ATP contacts are provided by Gly8 and Arg11. CTP-binding residues include Gly8 and Arg11. Mg(2+) is bound by residues Asp21 and Asp23. Arg91, Arg137, and Arg140 together coordinate ATP. Residues Arg91, Arg137, and Arg140 each coordinate CTP. An HD domain is found at 228-329; it reads TGVHVLSVLE…LELLQSFDVY (102 aa).

It belongs to the tRNA nucleotidyltransferase/poly(A) polymerase family. Bacterial CCA-adding enzyme type 1 subfamily. In terms of assembly, monomer. Can also form homodimers and oligomers. It depends on Mg(2+) as a cofactor. Ni(2+) is required as a cofactor.

It carries out the reaction a tRNA precursor + 2 CTP + ATP = a tRNA with a 3' CCA end + 3 diphosphate. It catalyses the reaction a tRNA with a 3' CCA end + 2 CTP + ATP = a tRNA with a 3' CCACCA end + 3 diphosphate. Functionally, catalyzes the addition and repair of the essential 3'-terminal CCA sequence in tRNAs without using a nucleic acid template. Adds these three nucleotides in the order of C, C, and A to the tRNA nucleotide-73, using CTP and ATP as substrates and producing inorganic pyrophosphate. tRNA 3'-terminal CCA addition is required both for tRNA processing and repair. Also involved in tRNA surveillance by mediating tandem CCA addition to generate a CCACCA at the 3' terminus of unstable tRNAs. While stable tRNAs receive only 3'-terminal CCA, unstable tRNAs are marked with CCACCA and rapidly degraded. This is Multifunctional CCA protein from Pseudomonas savastanoi pv. phaseolicola (strain 1448A / Race 6) (Pseudomonas syringae pv. phaseolicola (strain 1448A / Race 6)).